A 75-amino-acid chain; its full sequence is Small ribosomal subunit protein bS18 (75 aa).

This sequence belongs to the bacterial ribosomal protein bS18 family. In terms of assembly, part of the 30S ribosomal subunit. Forms a tight heterodimer with protein bS6.

In terms of biological role, binds as a heterodimer with protein bS6 to the central domain of the 16S rRNA, where it helps stabilize the platform of the 30S subunit. This is Small ribosomal subunit protein bS18 from Shewanella loihica (strain ATCC BAA-1088 / PV-4).